Here is a 312-residue protein sequence, read N- to C-terminus: Malate dehydrogenase (312 aa).

NAD(+) contacts are provided by residues 7-13 and Asp-34; that span reads GAAGGIG. 2 residues coordinate substrate: Arg-81 and Arg-87. NAD(+)-binding positions include Asn-94 and 117 to 119; that span reads ITN. Asn-119 and Arg-153 together coordinate substrate. The Proton acceptor role is filled by His-177. Met-227 provides a ligand contact to NAD(+).

This sequence belongs to the LDH/MDH superfamily. MDH type 1 family. In terms of assembly, homodimer.

It carries out the reaction (S)-malate + NAD(+) = oxaloacetate + NADH + H(+). Functionally, catalyzes the reversible oxidation of malate to oxaloacetate. The chain is Malate dehydrogenase from Escherichia coli (strain SE11).